Here is a 272-residue protein sequence, read N- to C-terminus: Dickkopf-related protein 1 (272 aa).

A signal peptide spans 1–31 (MMVVCAAAAVRFLAVFTMMALCSLPLLGASA). O-linked (GalNAc...) serine glycosylation occurs at Ser62. Disulfide bonds link Cys86-Cys98, Cys92-Cys114, Cys117-Cys131, Cys124-Cys136, Cys130-Cys141, Cys195-Cys207, Cys201-Cys216, Cys206-Cys243, Cys226-Cys251, and Cys245-Cys269. Residues 86–141 (CAEDEECGSDEYCSSPSRGAAGVGGVQICLACRKRRKRCMRHAMCCPGNYCKNGIC) form a DKK-type Cys-1 region. A DKK-type Cys-2 region spans residues 195 to 269 (CLRSSDCAAG…ASNSSRLHTC (75 aa)). Asn262 is a glycosylation site (N-linked (GlcNAc...) asparagine).

The protein belongs to the dickkopf family. As to quaternary structure, interacts (via the C-terminal Cys-rich domain) with LRP5 (via beta-propeller regions 3 and 4); the interaction, enhanced by MESD and or KREMEN, antagonizes Wnt-mediated signaling. Interacts with LRP6. Forms a ternary complex with LRP6 and KREM1. Interacts with KREM1.

Its subcellular location is the secreted. In terms of biological role, antagonizes canonical Wnt signaling by inhibiting LRP5/6 interaction with Wnt and by forming a ternary complex with the transmembrane protein KREMEN that promotes internalization of LRP5/6. Inhibits the pro-apoptotic function of KREMEN1 in a Wnt-independent manner, and has anti-apoptotic activity. Plays a role in limb development; attenuates Wnt signaling in the developing limb to allow normal limb patterning. This is Dickkopf-related protein 1 (Dkk1) from Mus musculus (Mouse).